Reading from the N-terminus, the 309-residue chain is MTQFAFVFPGQGSQTVGMLADMAASYPIVEETFAEASAALGYDLWALTQQGPAEELNKTWQTQPALLTASVALYRVWQQHGGKAPAMMAGHSLGEYSALVCAGVIDFADAVRLVEMRGKFMQEAVPEGTGAMAAIIGLDDASIGKACEEAAEGQVVSPVNFNSPGQVVIAGHKEAVERAGAACKAAGAKRALPLPVSVPSHCALMKPAADKLAVELAKITFNAPTVPVVNNVDVKCETNGDAIRDALVRQLYNPVQWTKSVEYMAAQGVEHLYEVGPGKVLTGLTKRIVDTLTASALNEPSAMAAALEL.

Residues Ser-92 and His-201 contribute to the active site.

The protein belongs to the FabD family.

It carries out the reaction holo-[ACP] + malonyl-CoA = malonyl-[ACP] + CoA. The protein operates within lipid metabolism; fatty acid biosynthesis. The sequence is that of Malonyl CoA-acyl carrier protein transacylase (fabD) from Escherichia coli O157:H7.